A 464-amino-acid chain; its full sequence is E3 ubiquitin-protein ligase TRAIP (464 aa).

The RING-type; atypical zinc finger occupies 7 to 50; the sequence is CTICSDFFDNARDVAAITCGHTFHQECLLQWFHSAPHRTCPQCR. Coiled coils occupy residues 142–186 and 236–277; these read LDKQ…MIRD and AQKA…LQKT. The tract at residues 439-464 is disordered; that stretch reads KRKKVSRPTACTSSLANQPRLEDFLK. A PIP-box motif is present at residues 456 to 464; it reads QPRLEDFLK.

It belongs to the TRAIP family.

The protein resides in the nucleus. It localises to the nucleoplasm. It is found in the nucleolus. Its subcellular location is the chromosome. The protein localises to the cytoplasm. It carries out the reaction S-ubiquitinyl-[E2 ubiquitin-conjugating enzyme]-L-cysteine + [acceptor protein]-L-lysine = [E2 ubiquitin-conjugating enzyme]-L-cysteine + N(6)-ubiquitinyl-[acceptor protein]-L-lysine.. It participates in protein modification; protein ubiquitination. E3 ubiquitin ligase required to protect genome stability in response to replication stress. Acts as a key regulator of interstrand cross-link repair, which takes place when both strands of duplex DNA are covalently tethered together, thereby blocking replication and transcription. Controls the choice between the two pathways of replication-coupled interstrand-cross-link repair by mediating ubiquitination of mcm7 subunit of the CMG helicase complex. Short ubiquitin chains on mcm7 promote recruitment of DNA glycosylase neil3. If the interstrand cross-link cannot be cleaved by neil3, the ubiquitin chains continue to grow on mcm7, promoting the unloading of the CMG helicase complex by the vcp/p97 ATPase, enabling the Fanconi anemia DNA repair pathway. Only catalyzes ubiquitination of mcm7 when forks converge. Also involved in the repair of covalent DNA-protein cross-links (DPCs) during DNA synthesis: promotes ubiquitination of DPCs, leading to their degradation by the proteasome. Also acts as a negative regulator of innate immune signaling by inhibiting activation of NF-kappa-B mediated by TNF. In Xenopus laevis (African clawed frog), this protein is E3 ubiquitin-protein ligase TRAIP.